An 851-amino-acid polypeptide reads, in one-letter code: ATP-dependent DNA helicase DDX31 (851 aa).

The segment at 1-196 (MAPDLASQRH…STSDRNQEER (196 aa)) is disordered. Residues 230-259 (AAFHELGLHPHLISTINTVLKMSSMTSVQK) carry the Q motif motif. In terms of domain architecture, Helicase ATP-binding spans 262–443 (IPVLLEGRDA…DISLHDPVSI (182 aa)). 275–282 (SQTGSGKT) lines the ATP pocket. Positions 388 to 391 (DEAD) match the DEAD box motif. Positions 480 to 659 (SLKQHVTVVP…VSEIKMEDIL (180 aa)) constitute a Helicase C-terminal domain. 2 disordered regions span residues 762–784 (KKRKAHVKRPDLHKKTQSKHSLA) and 804–851 (KQNA…SQKV). Arg-828 is modified (omega-N-methylarginine). Residues 841 to 851 (VQRDSKTSQKV) are compositionally biased toward basic and acidic residues.

The protein belongs to the DEAD box helicase family. DDX31/DBP7 subfamily. Interacts with NPM1; this interaction prevents interaction between NPM1 and HDM2. In terms of tissue distribution, weakly or undetectably expressed in normal organs. Up-regulated in renal cell carcinoma.

Its subcellular location is the nucleus. The protein resides in the nucleolus. The enzyme catalyses ATP + H2O = ADP + phosphate + H(+). In terms of biological role, may have DNA helicase activity and RNA helicase activity. Probably have ssDNA and RNA dependent ATPase activity. Plays a role in ribosome biogenesis and TP53/p53 regulation through its interaction with NPM1. In Homo sapiens (Human), this protein is ATP-dependent DNA helicase DDX31.